We begin with the raw amino-acid sequence, 518 residues long: Nitrogenase iron-iron protein alpha chain (518 aa).

[8Fe-7S] cluster is bound by residues cysteine 49 and cysteine 75. [8Fe-9S-C-homocitryl] cluster is bound by residues cysteine 257 and histidine 423.

As to quaternary structure, hexamer of two alpha, two beta, and two delta chains. [8Fe-7S] cluster is required as a cofactor. [8Fe-9S-C-homocitryl] cluster serves as cofactor.

The catalysed reaction is N2 + 8 reduced [2Fe-2S]-[ferredoxin] + 16 ATP + 16 H2O = H2 + 8 oxidized [2Fe-2S]-[ferredoxin] + 2 NH4(+) + 16 ADP + 16 phosphate + 6 H(+). Functionally, this iron-iron protein is part of the nitrogenase complex that catalyzes the key enzymatic reactions in nitrogen fixation. Other nitrogenase complexes utilize a molybdenum-iron protein or a vanadium-iron protein. The protein is Nitrogenase iron-iron protein alpha chain (anfD) of Ruminiclostridium hungatei (Clostridium hungatei).